The sequence spans 534 residues: Cyclin-L1 (534 aa).

2 cyclin-like regions span residues 94–196 (ELIQ…RVLK) and 209–293 (KIIV…KILQ). Residues 327 to 534 (LPEGAPVLDN…DHPGHSRHRR (208 aa)) form a disordered region. The segment covering 389–399 (KGRESRSRSGS) has biased composition (basic and acidic residues). Low complexity-rich tracts occupy residues 400-412 (RDQS…SRSA) and 437-453 (RSGS…TYKS). The segment at 400-436 (RDQSYSRSPSRSASPKHRKSESYSTSSGSKSHSRSRS) is RS. Residues 468–485 (SAHKARKSRSRSSSRSRS) are compositionally biased toward basic residues. Basic and acidic residues predominate over residues 486–495 (RSRERSDHSG). A compositionally biased stretch (basic residues) spans 496-511 (KYKKKSHYYRNHRHER). Over residues 512 to 528 (SRSYERASHRYDRDHPG) the composition is skewed to basic and acidic residues.

Belongs to the cyclin family. Cyclin L subfamily.

Its subcellular location is the nucleus speckle. It localises to the nucleus. The protein localises to the nucleoplasm. Involved in pre-mRNA splicing. The chain is Cyclin-L1 (CCNL1) from Gallus gallus (Chicken).